The following is a 489-amino-acid chain: Valine--tRNA ligase (489 aa).

Residues 482–486 carry the 'KMSKS' region motif; it reads KMSKS. An ATP-binding site is contributed by Lys-485.

This sequence belongs to the class-I aminoacyl-tRNA synthetase family.

The catalysed reaction is tRNA(Val) + L-valine + ATP = L-valyl-tRNA(Val) + AMP + diphosphate. This chain is Valine--tRNA ligase (VALS), found in Trichomonas vaginalis.